The chain runs to 257 residues: Auxin-responsive protein IAA17 (257 aa).

Disordered stretches follow at residues 1 to 51 (MSPP…PAAT) and 85 to 119 (GKKA…QVVG). Residues 33-37 (LRLGL) carry the EAR-like (transcriptional repression) motif. Residues 105–118 (AAAPQAPAAKAQVV) are compositionally biased toward low complexity. One can recognise a PB1 domain in the interval 151–239 (FLYVKVSMDG…SCRRLRIMKG (89 aa)).

Belongs to the Aux/IAA family. Homodimers and heterodimers. As to expression, highly expressed in etiolated seedlings and flowers. Expressed in roots and green seedlings.

The protein resides in the nucleus. In terms of biological role, aux/IAA proteins are short-lived transcriptional factors that function as repressors of early auxin response genes at low auxin concentrations. The polypeptide is Auxin-responsive protein IAA17 (IAA17) (Oryza sativa subsp. japonica (Rice)).